Reading from the N-terminus, the 130-residue chain is uncharacterized protein (130 aa).

Belongs to the thioester dehydratase family. FabZ subfamily.

This is an uncharacterized protein from Bacillus subtilis (strain 168).